A 306-amino-acid polypeptide reads, in one-letter code: tRNA pseudouridine synthase B (306 aa).

The Nucleophile role is filled by aspartate 43.

It belongs to the pseudouridine synthase TruB family. Type 1 subfamily.

The catalysed reaction is uridine(55) in tRNA = pseudouridine(55) in tRNA. Functionally, responsible for synthesis of pseudouridine from uracil-55 in the psi GC loop of transfer RNAs. The protein is tRNA pseudouridine synthase B of Heliobacterium modesticaldum (strain ATCC 51547 / Ice1).